Reading from the N-terminus, the 182-residue chain is HGPRTase-like protein 1 (182 aa).

The protein belongs to the purine/pyrimidine phosphoribosyltransferase family. Archaeal HPRT subfamily.

May catalyze a purine salvage reaction, the substrate is unknown. The polypeptide is HGPRTase-like protein 1 (Haloarcula marismortui (strain ATCC 43049 / DSM 3752 / JCM 8966 / VKM B-1809) (Halobacterium marismortui)).